A 900-amino-acid chain; its full sequence is Methionine--tRNA ligase, cytoplasmic (900 aa).

The 125-residue stretch at 74 to 198 folds into the GST C-terminal domain; the sequence is GWEQDDLTNQ…VLKQQGVLAL (125 aa). Residues 273–283 carry the 'HIGH' region motif; the sequence is PYVNNVPHLGN. The 'KMSKS' region motif lies at 593–597; the sequence is KFSKS. Position 596 (lysine 596) interacts with ATP. Serine 825 carries the phosphoserine modification. The residue at position 835 (threonine 835) is a Phosphothreonine. In terms of domain architecture, WHEP-TRS spans 841–897; that stretch reads QIQALMDEVTKQGNIVRELKAQKADKNEVAAEVAKLLDLKKQLAVAEGKPPEAPKGK.

It belongs to the class-I aminoacyl-tRNA synthetase family. As to quaternary structure, monomer. Part of a multisubunit complex that groups tRNA ligases for Arg (RARS1), Asp (DARS1), Gln (QARS1), Ile (IARS1), Leu (LARS1), Lys (KARS1), Met (MARS1) the bifunctional ligase for Glu and Pro (EPRS1) and the auxiliary subunits AIMP1/p43, AIMP2/p38 and EEF1E1/p18. Forms a linear complex that contains MARS1, EEF1E1, EPRS1 and AIMP2 that is at the core of the multisubunit complex.

It localises to the cytoplasm. It is found in the cytosol. The protein localises to the nucleus. The protein resides in the nucleolus. It carries out the reaction tRNA(Met) + L-methionine + ATP = L-methionyl-tRNA(Met) + AMP + diphosphate. Enzyme activity is increased by spermidine, EEF1A1, and when the Mg(2+) concentration is increased from 5 mM to 13 mM (in vitro), possibly by promoting the dissociation of the complex between the enzyme and its product. Functionally, catalyzes the specific attachment of an amino acid to its cognate tRNA in a 2 step reaction: the amino acid (AA) is first activated by ATP to form AA-AMP and then transferred to the acceptor end of the tRNA. Plays a role in the synthesis of ribosomal RNA in the nucleolus. The polypeptide is Methionine--tRNA ligase, cytoplasmic (Homo sapiens (Human)).